The sequence spans 132 residues: Small ribosomal subunit protein uS8 (132 aa).

It belongs to the universal ribosomal protein uS8 family. As to quaternary structure, part of the 30S ribosomal subunit. Contacts proteins S5 and S12.

One of the primary rRNA binding proteins, it binds directly to 16S rRNA central domain where it helps coordinate assembly of the platform of the 30S subunit. The chain is Small ribosomal subunit protein uS8 from Exiguobacterium sibiricum (strain DSM 17290 / CCUG 55495 / CIP 109462 / JCM 13490 / 255-15).